The following is a 200-amino-acid chain: dITP/XTP pyrophosphatase (200 aa).

Substrate is bound at residue 7–12; the sequence is SNNRGK. D68 (proton acceptor) is an active-site residue. Mg(2+) is bound at residue D68. Residues A69, 154-157, K177, and 182-183 contribute to the substrate site; these read FGFD and HR.

It belongs to the HAM1 NTPase family. In terms of assembly, homodimer. Mg(2+) serves as cofactor.

It carries out the reaction XTP + H2O = XMP + diphosphate + H(+). The catalysed reaction is dITP + H2O = dIMP + diphosphate + H(+). It catalyses the reaction ITP + H2O = IMP + diphosphate + H(+). In terms of biological role, pyrophosphatase that catalyzes the hydrolysis of nucleoside triphosphates to their monophosphate derivatives, with a high preference for the non-canonical purine nucleotides XTP (xanthosine triphosphate), dITP (deoxyinosine triphosphate) and ITP. Seems to function as a house-cleaning enzyme that removes non-canonical purine nucleotides from the nucleotide pool, thus preventing their incorporation into DNA/RNA and avoiding chromosomal lesions. The sequence is that of dITP/XTP pyrophosphatase from Delftia acidovorans (strain DSM 14801 / SPH-1).